The following is a 166-amino-acid chain: Putative 4-hydroxy-4-methyl-2-oxoglutarate aldolase 3 (166 aa).

An N-acetylalanine modification is found at A2. Substrate contacts are provided by residues 81-84 (GGNL) and R103. D104 serves as a coordination point for a divalent metal cation.

This sequence belongs to the class II aldolase/RraA-like family. In terms of assembly, homotrimer. The cofactor is a divalent metal cation.

It carries out the reaction 4-hydroxy-4-methyl-2-oxoglutarate = 2 pyruvate. The catalysed reaction is oxaloacetate + H(+) = pyruvate + CO2. Catalyzes the aldol cleavage of 4-hydroxy-4-methyl-2-oxoglutarate (HMG) into 2 molecules of pyruvate. Also contains a secondary oxaloacetate (OAA) decarboxylase activity due to the common pyruvate enolate transition state formed following C-C bond cleavage in the retro-aldol and decarboxylation reactions. The chain is Putative 4-hydroxy-4-methyl-2-oxoglutarate aldolase 3 from Arabidopsis thaliana (Mouse-ear cress).